The chain runs to 268 residues: Activator of basal transcription 1 (268 aa).

Residues 6-38 (KLVEEQKAAMEEEKEVNAEAAEELEEAEEASCN) are a coiled coil. Positions 47–144 (GIVYLGHVPP…RKRSPFRYDL (98 aa)) constitute an RRM domain. Residues 163-193 (AFERQVRRQRLRAEVAQAKRETDFYLRNVEQ) are a coiled coil. The disordered stretch occupies residues 200–242 (ADGDATRPNSSWTFTQRPTEQELRAQKGARPGGRERARLATVQ). Residues 206-217 (RPNSSWTFTQRP) are compositionally biased toward polar residues.

This sequence belongs to the ESF2/ABP1 family. Interacts with IGHMBP2. Interacts with ESF1/ABTAP.

The protein resides in the nucleus. It localises to the nucleolus. Functionally, may be a novel TATA-binding protein (TBP) which can function as a basal transcription activator. Can act as a regulator of basal transcription for class II genes. In Rattus norvegicus (Rat), this protein is Activator of basal transcription 1 (Abt1).